A 139-amino-acid chain; its full sequence is MARKIKLVLGVIGSDCHAVGNKILDYSLTEAGFEVTNIGVLSPQEDFINAALETNADAILVSSLYGQGELDCKGLREKCDEAGLKGIKLFVGGNIVVGKQNFDEVHKRFTAMGFDHVYPPGTPVETTIKDLHADFPDHA.

The region spanning K4 to A139 is the B12-binding domain. Residues S14–A18, H17, S62–L64, and N94–G98 contribute to the adenosylcob(III)alamin site.

Belongs to the methylaspartate mutase GlmS subunit family. As to quaternary structure, heterotetramer composed of 2 epsilon subunits (GlmE) and 2 sigma subunits (GlmS). GlmE exists as a homodimer and GlmS as a monomer. The cofactor is adenosylcob(III)alamin.

It catalyses the reaction (2S,3S)-3-methyl-L-aspartate = L-glutamate. It functions in the pathway amino-acid degradation; L-glutamate degradation via mesaconate pathway; acetate and pyruvate from L-glutamate: step 1/4. Catalyzes the carbon skeleton rearrangement of L-glutamate to L-threo-3-methylaspartate ((2S,3S)-3-methylaspartate). In Treponema denticola (strain ATCC 35405 / DSM 14222 / CIP 103919 / JCM 8153 / KCTC 15104), this protein is Glutamate mutase sigma subunit.